We begin with the raw amino-acid sequence, 560 residues long: MAKKVAVIGAGVSGLSSIKCCLDENLEPTCFERTSDFGGLWKFADTSEDGMTRVYRSLVTNVCKEMSCYSDFPFREDYPNFMSHEKFWDYLREFAEHFGLLRYIRFKTTVLSVTKRPDFSETGQWDVVTETEGKRDRAVFDAVMVCTGQFLSPHLPLESFPGIHKFKGQILHSQEYRIPDAFRGKRILVVGLGNTGGDIAVELSEIAAQVFLSTRTGTWVLSRSSPGGYPFNMIQTRWLNFLVRVLPSRFINWTHERKMNKILNHENYGLSIAKGKKPKFIVNDELPTCILCGKVTMKTSVKDFTESSVIFEDGTTEANIDVVIFTTGYEFSFPFFEEPLKSLCTKKIILYKRVFPPNLERATLAIIGLISLNGSILVGTEFQARWATRVFKGLCSIPPSQKLMAEATKTEQLIKRGVIKDTSQDKLDFITYMDELTQCIGAKPSIPLLFIKDPRLAWEVFFGPCTPYQYRLVGPGRWDGARNAILTQWDRTLKPLKTRIVPKSPEPTSLSHYLIAWGAPVLLVSLLLIYKSSHFLELVQGKLPRRFPPYRLLWYMPQNS.

Residues 9-13 (GAGVS), E32, and 40-41 (LW) each bind FAD. NADP(+) is bound by residues 60 to 61 (TN) and 195 to 198 (TGGD). The chain crosses the membrane as a helical span at residues 510–530 (LSHYLIAWGAPVLLVSLLLIY).

Belongs to the FMO family. The cofactor is FAD.

The protein localises to the microsome membrane. It localises to the endoplasmic reticulum membrane. The enzyme catalyses N,N-dimethylaniline + NADPH + O2 + H(+) = N,N-dimethylaniline N-oxide + NADP(+) + H2O. Its function is as follows. This protein is involved in the oxidative metabolism of a variety of xenobiotics such as drugs and pesticides. The polypeptide is Dimethylaniline monooxygenase [N-oxide-forming] 4 (Fmo4) (Mus musculus (Mouse)).